We begin with the raw amino-acid sequence, 204 residues long: Synaptosomal-associated protein 25-A (204 aa).

A compositionally biased stretch (basic and acidic residues) spans 1-11; the sequence is MAEDADMRNEL. Residues 1–25 are disordered; it reads MAEDADMRNELSDMQQRADQLADES. T-SNARE coiled-coil homology domains are found at residues 19–81 and 138–200; these read DQLA…LNDL and DARE…ATKM.

The protein belongs to the SNAP-25 family.

It is found in the synapse. The protein resides in the synaptosome. Its subcellular location is the cell membrane. In terms of biological role, may play an important role in the synaptic function of specific neuronal systems. Associates with proteins involved in vesicle docking and membrane fusion. This Carassius auratus (Goldfish) protein is Synaptosomal-associated protein 25-A (snap25a).